Consider the following 760-residue polypeptide: ATP-dependent DNA helicase Hel308 (760 aa).

Residues Gln28 and 46 to 53 each bind ATP; that span reads IPTASGKT. A Helicase ATP-binding domain is found at 33–199; the sequence is EMGLLEKKNL…WLGAALVLSE (167 aa). The short motif at 144-147 is the DEAH box element; that stretch reads DEIH. The Helicase C-terminal domain occupies 232–426; the sequence is AVNLVLDTIK…SKLGTENALR (195 aa).

It belongs to the helicase family. Hel308 subfamily. As to quaternary structure, monomer.

The enzyme catalyses Couples ATP hydrolysis with the unwinding of duplex DNA by translocating in the 3'-5' direction.. It carries out the reaction ATP + H2O = ADP + phosphate + H(+). DNA-dependent ATPase and 3'-5' DNA helicase that may be involved in repair of stalled replication forks. This is ATP-dependent DNA helicase Hel308 from Methanococcoides burtonii (strain DSM 6242 / NBRC 107633 / OCM 468 / ACE-M).